Reading from the N-terminus, the 346-residue chain is MNPLIFTTILMTVLLGTMIVMMSSHWLMIWIGFEMNLLAIIPILMKKYNPRTMEASTKYFLTQATASMLLMMAIIINLMHSGQWTITKVFNPTASIIMTSALAMKLGLTPFHFWVPEVTQGISLTSGLILLTWQKLAPMSILYQISPSINLNILLTMAVLSILVGGWGGLNQTQLRKIMAYSSIAHMGWMTAVLVYNPTLTMLNMLIYIMMTLTMFMLFIHSSSTTTLSLSHTWNKMPLTTTLILITLLSMGGLPPLSGFMPKWMIIQELTKNSSIILPTLMAIMALLNLYFYMRLTYSTSLTMFPSTNNMKMKWQFETKRITLLPPLIVMSSLLLPLTPMLSILD.

The next 11 helical transmembrane spans lie at 3 to 23 (PLIF…VMMS), 25 to 45 (HWLM…PILM), 59 to 79 (YFLT…INLM), 96 to 116 (IIMT…FWVP), 122 to 142 (ISLT…MSIL), 149 to 169 (INLN…GWGG), 178 to 198 (IMAY…VYNP), 200 to 220 (LTML…MLFI), 242 to 262 (TLIL…GFMP), 274 to 294 (SSII…YFYM), and 322 to 342 (ITLL…TPML).

This sequence belongs to the complex I subunit 2 family. In terms of assembly, core subunit of respiratory chain NADH dehydrogenase (Complex I) which is composed of 45 different subunits. Interacts with TMEM242.

It is found in the mitochondrion inner membrane. The enzyme catalyses a ubiquinone + NADH + 5 H(+)(in) = a ubiquinol + NAD(+) + 4 H(+)(out). In terms of biological role, core subunit of the mitochondrial membrane respiratory chain NADH dehydrogenase (Complex I) which catalyzes electron transfer from NADH through the respiratory chain, using ubiquinone as an electron acceptor. Essential for the catalytic activity and assembly of complex I. In Equus caballus (Horse), this protein is NADH-ubiquinone oxidoreductase chain 2.